The chain runs to 56 residues: Defensin-1 (56 aa).

An N-terminal signal peptide occupies residues 1 to 24; that stretch reads MKAIVVLLILALILCLYAMTTVEG. Disulfide bonds link Cys26–Cys45, Cys31–Cys53, and Cys35–Cys55.

It localises to the secreted. Antibacterial protein involved in the immune response to septic injury. When combined with 14.026 kDa and 14.059 kDa hemolymph antimicrobial peptides, it has a strong cooperative activity against the Gram-positive bacteria B.subtilis and S.aureus, and against the Gram-negative bacteria E.coli DH5-alpha and K.pneumoniae ATCC 138833. Does not show detectable antibacterial activity when present alone. Has no hemolytic activity in human erythrocytes. The chain is Defensin-1 from Centruroides limpidus (Mexican scorpion).